The following is a 495-amino-acid chain: N-succinylglutamate 5-semialdehyde dehydrogenase (495 aa).

Residue 228-233 coordinates NAD(+); the sequence is GSYATG. Active-site residues include E251 and C285.

It belongs to the aldehyde dehydrogenase family. AstD subfamily.

It catalyses the reaction N-succinyl-L-glutamate 5-semialdehyde + NAD(+) + H2O = N-succinyl-L-glutamate + NADH + 2 H(+). It participates in amino-acid degradation; L-arginine degradation via AST pathway; L-glutamate and succinate from L-arginine: step 4/5. Its function is as follows. Catalyzes the NAD-dependent reduction of succinylglutamate semialdehyde into succinylglutamate. The polypeptide is N-succinylglutamate 5-semialdehyde dehydrogenase (Legionella pneumophila (strain Paris)).